The sequence spans 895 residues: MTTLDHVIATHQSEWVSFSEEPLFPTPLEGGTEEHFPGLSSSSERSESSSGENHVVDEGSQDLSHSEQDDSSEKMGLISEAASPPGSPVQPTPDLASAISNWVQFEDDTPWSSTSPPHKETALTLTMPCWTCPSFDSLRRCPLTSESSWTTHSEDTSSPSVAPSYTDLQLINTEEQASGRASGTDSTDNSSSLQEDEEVEMEAISWWAGSPAMNGHPAAPPVTTARFPSWVTFEDNEVGCPSPPVPSPKKPNTPSAATAAPDVPFNSTGSFKRDRPKSTLMNLPKVQKLDISSLNRPPSVIEAPPWRATNPFLNETLQDVQPSPINPFSAFFEEQERRSQNSSVSSTTGKSQRDSLIVVYQDAISFDDSGKSQPHPDAIEKLKQLQIDDPDPVGNTALPDDDPTASVELDAPSPASALSQPRDGWPMMLRIPEKKNIMSSRHWGPIYIKLTASGYLQLYYEQGLEKPFREFKLEICHEVSEPRLQNYDENGRIHSLRIDRVTYKEKKKYQPKPAVAHAAEREQVIKLGTTNYDDFRSFIHAVQDRLMDLPVLSMDLSTVGLNYLEEEITVDVRDEFSGTVGKGDNQILQHHVLTRIHILSFLSGLAECRLGLNDILIKGNEIVSRQDIMPTTTTKWIKLHECRFHGCVDEDVFNSSRVILFNPLDACRFELMRFRTVFAEKTLPFTLRTAASINGAEVEVQSWLRMSPGFSSNRDPLTQVPCENVMVRYPVPSEWVKNFRRDSVLGEKSLKAKVNRGASFGSAGASGSEPVMRVTLGTAKYEHAFNSIVWRINRLPDKNSASGHPHCFFCHLELGSDREVPSRFANYVNVEFSMPTTSASKAAVRSVSVEDKPDVRKWVNYSAHYSYKVEIEQKKSLKPDFEGEDLENPKECGVQ.

Disordered regions lie at residues Trp15–Lys119, Ser145–Val222, and Glu234–Leu280. Residues Ser64–Glu73 are compositionally biased toward basic and acidic residues. Over residues Ser145–Leu193 the composition is skewed to polar residues. Residues Pro241–Pro251 show a composition bias toward pro residues. Thr253 is modified (phosphothreonine). A phosphoserine mark is found at Ser278 and Ser299. 2 consecutive short sequence motifs (NPF) follow at residues Asn310–Phe312 and Asn326–Phe328. The tract at residues Gln386–Pro421 is disordered. An SHD domain is found at Gly424–Ser557. The 308-residue stretch at Glu565–Glu872 folds into the MHD domain. Position 759 is a phosphoserine (Ser759).

The protein belongs to the Stoned B family. As to quaternary structure, interacts with the second C2 domain of synaptotagmins SYT1 and SYT2. Interacts with EPS15, EPS15R and ITSN1. Interacts indirectly with the AP-2 adapter complex. Interacts with TOR1A and COPS4; the interaction controls STON2 protein stability. Phosphorylated in vitro by PKD. Post-translationally, neddylated; deneddylated via its interaction with the COP9 signalosome (CSN) complex through TOR1A and COPS4. In terms of processing, ubiquitinated; leading to its degradation.

It localises to the cytoplasm. The protein resides in the membrane. The protein localises to the synapse. It is found in the synaptosome. In terms of biological role, adapter protein involved in endocytic machinery. Involved in the synaptic vesicle recycling. May facilitate clathrin-coated vesicle uncoating. This Mus musculus (Mouse) protein is Stonin-2 (Ston2).